The sequence spans 248 residues: Ribosomal RNA small subunit methyltransferase J (248 aa).

Residues 98–99 (RD), 114–115 (ER), 150–151 (SS), and Asp168 each bind S-adenosyl-L-methionine.

It belongs to the methyltransferase superfamily. RsmJ family.

It localises to the cytoplasm. It catalyses the reaction guanosine(1516) in 16S rRNA + S-adenosyl-L-methionine = N(2)-methylguanosine(1516) in 16S rRNA + S-adenosyl-L-homocysteine + H(+). Functionally, specifically methylates the guanosine in position 1516 of 16S rRNA. The sequence is that of Ribosomal RNA small subunit methyltransferase J from Shewanella baltica (strain OS223).